We begin with the raw amino-acid sequence, 360 residues long: Phosphoserine aminotransferase (360 aa).

L-glutamate is bound at residue R41. Residues W101, T152, D172, and Q195 each coordinate pyridoxal 5'-phosphate. An N6-(pyridoxal phosphate)lysine modification is found at K196. 237–238 (NT) is a pyridoxal 5'-phosphate binding site.

This sequence belongs to the class-V pyridoxal-phosphate-dependent aminotransferase family. SerC subfamily. In terms of assembly, homodimer. Pyridoxal 5'-phosphate is required as a cofactor.

The protein localises to the cytoplasm. The catalysed reaction is O-phospho-L-serine + 2-oxoglutarate = 3-phosphooxypyruvate + L-glutamate. The enzyme catalyses 4-(phosphooxy)-L-threonine + 2-oxoglutarate = (R)-3-hydroxy-2-oxo-4-phosphooxybutanoate + L-glutamate. The protein operates within amino-acid biosynthesis; L-serine biosynthesis; L-serine from 3-phospho-D-glycerate: step 2/3. Its pathway is cofactor biosynthesis; pyridoxine 5'-phosphate biosynthesis; pyridoxine 5'-phosphate from D-erythrose 4-phosphate: step 3/5. Functionally, catalyzes the reversible conversion of 3-phosphohydroxypyruvate to phosphoserine and of 3-hydroxy-2-oxo-4-phosphonooxybutanoate to phosphohydroxythreonine. In Burkholderia orbicola (strain MC0-3), this protein is Phosphoserine aminotransferase.